We begin with the raw amino-acid sequence, 58 residues long: MATVKVTLIKSVSGRIPNHKLCVKGLGLRRIGHTVEVQDTPENRGMINKAYYMLRVEG.

The protein belongs to the universal ribosomal protein uL30 family. In terms of assembly, part of the 50S ribosomal subunit.

The sequence is that of Large ribosomal subunit protein uL30 from Pseudomonas putida (strain W619).